A 181-amino-acid chain; its full sequence is Shikimate kinase 2 (181 aa).

Position 12 to 17 (12 to 17 (GCGKTT)) interacts with ATP. Positions 16 and 32 each coordinate Mg(2+). Residues Asp-34, Arg-58, and Gly-79 each coordinate substrate. The tract at residues 112 to 126 (EAEPEADLRPTLTGK) is LID domain. Arg-120 serves as a coordination point for ATP. Arg-139 serves as a coordination point for substrate.

Belongs to the shikimate kinase family. AroL subfamily. As to quaternary structure, monomer. It depends on Mg(2+) as a cofactor.

Its subcellular location is the cytoplasm. The catalysed reaction is shikimate + ATP = 3-phosphoshikimate + ADP + H(+). Its pathway is metabolic intermediate biosynthesis; chorismate biosynthesis; chorismate from D-erythrose 4-phosphate and phosphoenolpyruvate: step 5/7. In terms of biological role, catalyzes the specific phosphorylation of the 3-hydroxyl group of shikimic acid using ATP as a cosubstrate. The protein is Shikimate kinase 2 of Salmonella dublin (strain CT_02021853).